Here is a 265-residue protein sequence, read N- to C-terminus: Glutamate racemase (265 aa).

Substrate-binding positions include 12–13 (DS) and 44–45 (YG). Cysteine 75 serves as the catalytic Proton donor/acceptor. 76 to 77 (NT) serves as a coordination point for substrate. Residue cysteine 186 is the Proton donor/acceptor of the active site. 187-188 (TH) provides a ligand contact to substrate.

This sequence belongs to the aspartate/glutamate racemases family.

It catalyses the reaction L-glutamate = D-glutamate. The protein operates within cell wall biogenesis; peptidoglycan biosynthesis. Functionally, provides the (R)-glutamate required for cell wall biosynthesis. This chain is Glutamate racemase, found in Pseudomonas aeruginosa (strain UCBPP-PA14).